Here is an 80-residue protein sequence, read N- to C-terminus: Serine protease inhibitor Kazal-type 6 (80 aa).

The signal sequence occupies residues 1-23 (MKTSGVFLLLSLALFCFFSGVFG). Pyrrolidone carboxylic acid is present on Q24. In terms of domain architecture, Kazal-like spans 24–80 (QGAQVDCAEFKDPKVYCTRESNPHCGSDGQTYGNKCAFCKAVMKSGGKINLKHRGKC). Intrachain disulfides connect C30–C62, C40–C59, and C48–C80.

In terms of tissue distribution, seminal plasma.

It is found in the secreted. Serine protease inhibitor selective for kallikreins. Efficiently inhibits KLK4, KLK5, KLK6, KLK7, KLK12, KLK13 and KLK14. Doesn't inhibit KLK8. Inhibits acrosin, trypsin, and chymotrypsin. The sequence is that of Serine protease inhibitor Kazal-type 6 (SPINK6) from Bos taurus (Bovine).